Consider the following 407-residue polypeptide: MSNVYDILKERGYIKQLTHEEEIRELLGKEKISFYIGFDPTADSLHVGHFLQMMVMAHMQKAGHRPIALVGGGTGMIGDPTGKTDMRKMMTKEQIEHNCNCFKKQLAKIIDFSEDKAIMVNNADWLLNLNYIEFLREIGVHFSVNKMLTAECFKSRLEKGLSFLEFNYMLMQGYDFLELNRKYNCVMELGGDDQWSNILAGVDLIRRKESKSAYGMTFTLLTNSEGKKMGKTESGALWLDPEKTSPYEFYQYWRNVADADVEKCLRLITFLPMDEVRRLSSLEGAEINEAKKVLAFEVTKLIHGEEEAQKAKIAAEALFGGNAKDLGNMPTAYIDKNDLNNLLVDLLVKCEILPSKSEARRLIKQGGLYLNDEKVTDMNLVVTEEHVTEDGIMIRRGKKNFNRIVVE.

L-tyrosine is bound at residue Tyr-35. A 'HIGH' region motif is present at residues 40-49; it reads PTADSLHVGH. Tyr-168 and Gln-172 together coordinate L-tyrosine. Residues 228–232 carry the 'KMSKS' region motif; the sequence is KMGKT. Residue Lys-231 participates in ATP binding. The S4 RNA-binding domain occupies 341–405; that stretch reads NLLVDLLVKC…RGKKNFNRIV (65 aa).

It belongs to the class-I aminoacyl-tRNA synthetase family. TyrS type 1 subfamily. As to quaternary structure, homodimer.

It localises to the cytoplasm. The catalysed reaction is tRNA(Tyr) + L-tyrosine + ATP = L-tyrosyl-tRNA(Tyr) + AMP + diphosphate + H(+). Catalyzes the attachment of tyrosine to tRNA(Tyr) in a two-step reaction: tyrosine is first activated by ATP to form Tyr-AMP and then transferred to the acceptor end of tRNA(Tyr). This Clostridium botulinum (strain ATCC 19397 / Type A) protein is Tyrosine--tRNA ligase.